We begin with the raw amino-acid sequence, 473 residues long: MTRGRVIQVMGPVVDVKFENGHLPAIYNALKIQHKARNENEVDIDLTLEVALHLGDDTVRTIAMASTDGLIRGMEVIDTGAPISVPVGQVTLGRVFNVLGEPIDLEGDIPADARRDPIHRPAPKFEELATEVEILETGIKVVDLLAPYIKGGKIGLFGGAGVGKTVLIQELIHNIAQEHGGISVFAGVGERTREGNDLYHEMKDSGVISKTAMVFGQMNEPPGARMRVALTGLTMAEYFRDEQGQDGLLFIDNIFRFTQAGSEVSALLGRMPSAIGYQPTLATEMGQLQERITSTAKGSITSIQAIYVPADDYTDPAPATTFSHLDATTNLERKLAEMGIYPAVDPLVSTSRALAPEIVGEEHYQVARKVQQTLERYKELQDIIAILGMDELSDEDKLVVHRARRIQFFLSQNFHVAEQFTGQPGSYVPVKETVRGFKEILEGKYDHLPEDRFRLVGRIEEVVEKAKAMGVEV.

158–165 (GGAGVGKT) serves as a coordination point for ATP.

It belongs to the ATPase alpha/beta chains family. F-type ATPases have 2 components, CF(1) - the catalytic core - and CF(0) - the membrane proton channel. CF(1) has five subunits: alpha(3), beta(3), gamma(1), delta(1), epsilon(1). CF(0) has three main subunits: a(1), b(2) and c(9-12). The alpha and beta chains form an alternating ring which encloses part of the gamma chain. CF(1) is attached to CF(0) by a central stalk formed by the gamma and epsilon chains, while a peripheral stalk is formed by the delta and b chains.

It is found in the cell membrane. It carries out the reaction ATP + H2O + 4 H(+)(in) = ADP + phosphate + 5 H(+)(out). Functionally, produces ATP from ADP in the presence of a proton gradient across the membrane. The catalytic sites are hosted primarily by the beta subunits. In Bacillus sp. (strain PS3), this protein is ATP synthase subunit beta.